Reading from the N-terminus, the 205-residue chain is 3-demethoxyubiquinol 3-hydroxylase (205 aa).

Residues Glu-54, Glu-84, His-87, Glu-136, Glu-168, and His-171 each contribute to the Fe cation site.

The protein belongs to the COQ7 family. The cofactor is Fe cation.

The protein localises to the cell membrane. It catalyses the reaction a 5-methoxy-2-methyl-3-(all-trans-polyprenyl)benzene-1,4-diol + AH2 + O2 = a 3-demethylubiquinol + A + H2O. Its pathway is cofactor biosynthesis; ubiquinone biosynthesis. Catalyzes the hydroxylation of 2-nonaprenyl-3-methyl-6-methoxy-1,4-benzoquinol during ubiquinone biosynthesis. This Delftia acidovorans (strain DSM 14801 / SPH-1) protein is 3-demethoxyubiquinol 3-hydroxylase.